A 323-amino-acid chain; its full sequence is V-type ATP synthase subunit C (323 aa).

The protein belongs to the V-ATPase V0D/AC39 subunit family.

Functionally, produces ATP from ADP in the presence of a proton gradient across the membrane. The chain is V-type ATP synthase subunit C (atpC) from Thermus thermophilus (strain ATCC 27634 / DSM 579 / HB8).